Here is a 208-residue protein sequence, read N- to C-terminus: Inactive ribonuclease-like protein 10 (208 aa).

Positions 1–24 (MKVTLVHLLFMMLLLLLGLGLGLG) are cleaved as a signal peptide. Residues asparagine 125 and asparagine 147 are each glycosylated (N-linked (GlcNAc...) asparagine).

This sequence belongs to the pancreatic ribonuclease family. The N-terminus is blocked. Glycosylated. Male-specific expression in proximal caput of the epididymis (at protein level).

It localises to the secreted. Secreted proximal epididymal protein required for post-testicular sperm maturation and male fertility. May be involved in sperm adhesion to the egg zona pellucida. Does not have ribonuclease activity. The polypeptide is Inactive ribonuclease-like protein 10 (Rnase10) (Mus musculus (Mouse)).